Reading from the N-terminus, the 228-residue chain is Serum amyloid P-component (228 aa).

The N-terminal stretch at 1-20 (MDKLLLWMSVFTSLLSEAFA) is a signal peptide. In terms of domain architecture, Pentraxin (PTX) spans 25–224 (NQKVFVFPRE…YVVIKPRMWD (200 aa)). An N-linked (GlcNAc...) asparagine glycan is attached at N52. A disulfide bridge links C56 with C115. Residues D78, N79, E156, Q157, D158, and Q168 each coordinate Ca(2+).

This sequence belongs to the pentraxin family. As to quaternary structure, homopentamer. Pentraxin (or pentaxin) have a discoid arrangement of 5 non-covalently bound subunits. The cofactor is Ca(2+).

It localises to the secreted. The polypeptide is Serum amyloid P-component (Apcs) (Rattus norvegicus (Rat)).